Reading from the N-terminus, the 219-residue chain is Biofilm-associated metzincin protease inhibitor (219 aa).

The helical transmembrane segment at 4–24 threads the bilayer; it reads TWIYAASAAAIGGALIGGWLL. The span at 191 to 204 shows a compositional bias: basic and acidic residues; that stretch reads DIAARSDPHGDHVD. Positions 191–219 are disordered; that stretch reads DIAARSDPHGDHVDAPLAELPPMPPPAQG. The segment covering 209–219 has biased composition (pro residues); it reads ELPPMPPPAQG.

The protein resides in the cell membrane. Functionally, inhibitor of the metalloendopeptidase Mep72. Forms a protein-protein complex with the protease, which is the product of its coregulated adjacent gene, and probably prevents premature protease activity until the protein has been secreted. This is Biofilm-associated metzincin protease inhibitor from Pseudomonas aeruginosa (strain ATCC 15692 / DSM 22644 / CIP 104116 / JCM 14847 / LMG 12228 / 1C / PRS 101 / PAO1).